We begin with the raw amino-acid sequence, 351 residues long: Outer membrane porin PhoE (351 aa).

Residues 1-21 (MKKSTLALMMMGFVASTATQA) form the signal peptide.

The protein belongs to the Gram-negative porin family. As to quaternary structure, homotrimer.

It localises to the cell outer membrane. Uptake of inorganic phosphate, phosphorylated compounds, and some other negatively charged solutes. The chain is Outer membrane porin PhoE (phoE) from Klebsiella pneumoniae.